The following is a 405-amino-acid chain: Argininosuccinate synthase (405 aa).

Residues 11–19 (AYSGGLDTS) and A38 contribute to the ATP site. Positions 91 and 96 each coordinate L-citrulline. G121 is an ATP binding site. 3 residues coordinate L-aspartate: T123, N127, and D128. N127 contacts L-citrulline. Residues R131, S181, S190, E266, and Y278 each coordinate L-citrulline.

It belongs to the argininosuccinate synthase family. Type 1 subfamily. As to quaternary structure, homotetramer.

The protein localises to the cytoplasm. It carries out the reaction L-citrulline + L-aspartate + ATP = 2-(N(omega)-L-arginino)succinate + AMP + diphosphate + H(+). The protein operates within amino-acid biosynthesis; L-arginine biosynthesis; L-arginine from L-ornithine and carbamoyl phosphate: step 2/3. This is Argininosuccinate synthase from Nitratiruptor sp. (strain SB155-2).